We begin with the raw amino-acid sequence, 142 residues long: Hemoglobin subunit alpha-4 (142 aa).

Ser-1 bears the N-acetylserine mark. One can recognise a Globin domain in the interval 1–142; that stretch reads SLSAKDKANV…LALALAEKYR (142 aa). His-59 is an O2 binding site. His-88 is a heme b binding site.

This sequence belongs to the globin family. As to quaternary structure, heterotetramer of two alpha chains and two beta chains. Red blood cells.

Functionally, involved in oxygen transport from gills to the various peripheral tissues. This chain is Hemoglobin subunit alpha-4 (hba4), found in Oncorhynchus mykiss (Rainbow trout).